A 460-amino-acid chain; its full sequence is Zinc transporter 6 (460 aa).

Residues Met-1 to Lys-33 lie on the Cytoplasmic side of the membrane. Residues Ile-34–Ser-54 traverse the membrane as a helical segment. The Extracellular segment spans residues Thr-55 to Thr-64. The chain crosses the membrane as a helical span at residues Tyr-65–Met-85. The Cytoplasmic portion of the chain corresponds to Arg-86–Arg-98. The chain crosses the membrane as a helical span at residues Leu-99 to Leu-119. Topologically, residues Lys-120–Thr-134 are extracellular. A helical membrane pass occupies residues Gly-135–Ile-155. Over Arg-156 to Pro-200 the chain is Cytoplasmic. A helical transmembrane segment spans residues Phe-201–Ile-221. Over Asn-222–Asn-223 the chain is Extracellular. A helical transmembrane segment spans residues Tyr-224–Tyr-244. At Pro-245–Pro-460 the chain is on the cytoplasmic side. A disordered region spans residues Thr-371–Asn-390.

The protein belongs to the cation diffusion facilitator (CDF) transporter (TC 2.A.4) family. SLC30A subfamily. Heterodimer with SLC30A5; form a functional zinc ion transmembrane transporter. Expressed in brain and liver, and to a lower extent also in lung. Highly expressed in brain (at protein level).

It is found in the golgi apparatus. The protein localises to the trans-Golgi network membrane. Functionally, has probably no intrinsic transporter activity but together with SLC30A5 forms a functional zinc ion:proton antiporter heterodimer, mediating zinc entry into the lumen of organelles along the secretory pathway. As part of that zinc ion:proton antiporter, contributes to zinc ion homeostasis within the early secretory pathway and regulates the activation and folding of enzymes like alkaline phosphatases and enzymes involved in phosphatidylinositol glycan anchor biosynthesis. This chain is Zinc transporter 6 (Slc30a6), found in Mus musculus (Mouse).